The chain runs to 550 residues: Glucose-6-phosphate isomerase (550 aa).

The active-site Proton donor is E356. Active-site residues include H387 and K515.

Belongs to the GPI family.

The protein localises to the cytoplasm. It catalyses the reaction alpha-D-glucose 6-phosphate = beta-D-fructose 6-phosphate. Its pathway is carbohydrate biosynthesis; gluconeogenesis. The protein operates within carbohydrate degradation; glycolysis; D-glyceraldehyde 3-phosphate and glycerone phosphate from D-glucose: step 2/4. Its function is as follows. Catalyzes the reversible isomerization of glucose-6-phosphate to fructose-6-phosphate. This Aliivibrio fischeri (strain MJ11) (Vibrio fischeri) protein is Glucose-6-phosphate isomerase.